We begin with the raw amino-acid sequence, 240 residues long: UDP-2,3-diacylglucosamine hydrolase (240 aa).

Mn(2+)-binding residues include D8, H10, D41, N79, and H114. Position 79-80 (79-80 (NR)) interacts with substrate. D122, S160, N164, K167, and H195 together coordinate substrate. Residues H195 and H197 each contribute to the Mn(2+) site.

Belongs to the LpxH family. The cofactor is Mn(2+).

The protein resides in the cell inner membrane. It catalyses the reaction UDP-2-N,3-O-bis[(3R)-3-hydroxytetradecanoyl]-alpha-D-glucosamine + H2O = 2-N,3-O-bis[(3R)-3-hydroxytetradecanoyl]-alpha-D-glucosaminyl 1-phosphate + UMP + 2 H(+). Its pathway is glycolipid biosynthesis; lipid IV(A) biosynthesis; lipid IV(A) from (3R)-3-hydroxytetradecanoyl-[acyl-carrier-protein] and UDP-N-acetyl-alpha-D-glucosamine: step 4/6. Hydrolyzes the pyrophosphate bond of UDP-2,3-diacylglucosamine to yield 2,3-diacylglucosamine 1-phosphate (lipid X) and UMP by catalyzing the attack of water at the alpha-P atom. Involved in the biosynthesis of lipid A, a phosphorylated glycolipid that anchors the lipopolysaccharide to the outer membrane of the cell. This is UDP-2,3-diacylglucosamine hydrolase from Salmonella agona (strain SL483).